Reading from the N-terminus, the 265-residue chain is Hydroxyethylthiazole kinase (265 aa).

Residue Met36 participates in substrate binding. 2 residues coordinate ATP: Lys112 and Ser160. Gly187 serves as a coordination point for substrate.

The protein belongs to the Thz kinase family. The cofactor is Mg(2+).

It carries out the reaction 5-(2-hydroxyethyl)-4-methylthiazole + ATP = 4-methyl-5-(2-phosphooxyethyl)-thiazole + ADP + H(+). Its pathway is cofactor biosynthesis; thiamine diphosphate biosynthesis; 4-methyl-5-(2-phosphoethyl)-thiazole from 5-(2-hydroxyethyl)-4-methylthiazole: step 1/1. In terms of biological role, catalyzes the phosphorylation of the hydroxyl group of 4-methyl-5-beta-hydroxyethylthiazole (THZ). This Clostridium perfringens (strain SM101 / Type A) protein is Hydroxyethylthiazole kinase.